The sequence spans 193 residues: Probable oligoribonuclease (193 aa).

The region spanning 15–177 (IIWIDCEMTG…DDIMESIAEL (163 aa)) is the Exonuclease domain. Residue Tyr136 is part of the active site.

Belongs to the oligoribonuclease family.

In terms of biological role, 3'-to-5' exoribonuclease specific for small oligoribonucleotides. The polypeptide is Probable oligoribonuclease (Caenorhabditis elegans).